The sequence spans 208 residues: Small ribosomal subunit protein uS2 (208 aa).

It belongs to the universal ribosomal protein uS2 family.

The sequence is that of Small ribosomal subunit protein uS2 from Pyrobaculum calidifontis (strain DSM 21063 / JCM 11548 / VA1).